We begin with the raw amino-acid sequence, 122 residues long: Small ribosomal subunit protein uS13 (122 aa).

Residues 97–122 (PVRGQRTHTNARTRKGPAKAIAGKKK) are disordered.

It belongs to the universal ribosomal protein uS13 family. Part of the 30S ribosomal subunit. Forms a loose heterodimer with protein S19. Forms two bridges to the 50S subunit in the 70S ribosome.

In terms of biological role, located at the top of the head of the 30S subunit, it contacts several helices of the 16S rRNA. In the 70S ribosome it contacts the 23S rRNA (bridge B1a) and protein L5 of the 50S subunit (bridge B1b), connecting the 2 subunits; these bridges are implicated in subunit movement. Contacts the tRNAs in the A and P-sites. This Brucella abortus (strain S19) protein is Small ribosomal subunit protein uS13.